The chain runs to 450 residues: UDP-N-acetylmuramoylalanine--D-glutamate ligase (450 aa).

Residue 119 to 125 participates in ATP binding; the sequence is GSNGKTT.

This sequence belongs to the MurCDEF family.

The protein localises to the cytoplasm. It catalyses the reaction UDP-N-acetyl-alpha-D-muramoyl-L-alanine + D-glutamate + ATP = UDP-N-acetyl-alpha-D-muramoyl-L-alanyl-D-glutamate + ADP + phosphate + H(+). The protein operates within cell wall biogenesis; peptidoglycan biosynthesis. In terms of biological role, cell wall formation. Catalyzes the addition of glutamate to the nucleotide precursor UDP-N-acetylmuramoyl-L-alanine (UMA). The chain is UDP-N-acetylmuramoylalanine--D-glutamate ligase from Bacillus cereus (strain ATCC 14579 / DSM 31 / CCUG 7414 / JCM 2152 / NBRC 15305 / NCIMB 9373 / NCTC 2599 / NRRL B-3711).